The sequence spans 357 residues: NADPH HC-toxin reductase 1 (357 aa).

Residues Arg40, Lys47, 68–69 (DL), 88–90 (VAT), Tyr178, Lys182, 207–210 (LGLV), and Thr222 contribute to the NADP(+) site. Lys182 functions as the Proton donor in the catalytic mechanism.

It belongs to the NAD(P)-dependent epimerase/dehydratase family.

Activity is sensitive to heat, dependent on NADPH, and inhibited by p-hydroxymercuribenzoate and disulfiram. Its function is as follows. In tandem with Hm2, NADPH-dependent Helminthosporium carbonum (HC) toxin reductase (HCTR), which inactivates HC toxin, a cyclic tetrapeptide produced by the fungus Cochliobolus carbonum to permit infection and acting as an inhibitor of host histone deacetylases (HDACs), thus conferring resistance against C.carbonum race 1 in resistant cultivars (e.g. cv. B73 and cv. Wisconsin 22). Catalyzes the production of 8-hydroxy derivative of HC-toxin via the reduction of the 8-keto group of 2-amino-9,10-epoxy-8-oxo-decanoic acid, an amino acid of the HC-toxin. This chain is NADPH HC-toxin reductase 1, found in Zea mays (Maize).